Reading from the N-terminus, the 526-residue chain is Choline/ethanolamine transporter FLVCR2 (526 aa).

Residues 1 to 70 (MVNEGPNQEE…PSGLAHPSSS (70 aa)) form a disordered region. At 1 to 76 (MVNEGPNQEE…PSSSGPEDLS (76 aa)) the chain is on the cytoplasmic side. Residue 1–84 (MVNEGPNQEE…LSVIKVSRRR (84 aa)) coordinates heme b. A run of 5 repeats spans residues 25–30 (PSVSVH), 31–36 (PSVSVH), 37–42 (PSVSIN), 43–48 (PSVSVH), and 49–54 (PSSSAH). Over residues 25-56 (PSVSVHPSVSVHPSVSINPSVSVHPSSSAHPS) the composition is skewed to low complexity. The interval 25–72 (PSVSVHPSVSVHPSVSINPSVSVHPSSSAHPSALAQPSGLAHPSSSGP) is 8 X 6 AA tandem repeats of P-S-[VS]-S-[VIAG]-[HNP]. One copy of the 6; approximate repeat lies at 55–60 (PSALAQ). One copy of the 7; approximate repeat lies at 61–66 (PSGLAH). Repeat 8 spans residues 67–72 (PSSSGP). A helical membrane pass occupies residues 77–101 (VIKVSRRRWAVVLVFSCYSMCNSFQ). Choline-binding residues include N98 and W102. The Extracellular portion of the chain corresponds to 102–119 (WIQYGSINNIFMHFYGVS). Residues 120–147 (AFAIDWLSMCYMLTYIPLLLPVAWLLEK) traverse the membrane as a helical segment. At 148–149 (FG) the chain is on the cytoplasmic side. The chain crosses the membrane as a helical span at residues 150–169 (LRTIALTGSALNCLGAWVKL). Residues 170–176 (GSLKPHL) are Extracellular-facing. The chain crosses the membrane as a helical span at residues 177–205 (FPVTVVGQLICSVAQVFILGMPSRIASVW). 2 residues coordinate choline: Q191 and L195. The Cytoplasmic portion of the chain corresponds to 206–210 (FGANE). A helical transmembrane segment spans residues 211–236 (VSTACSVAVFGNQLGIAIGFLVPPVL). The Extracellular segment spans residues 237–241 (VPNIE). The helical transmembrane segment at 242-271 (DRDELAYHISIMFYIIGGVATLLLILVIIV) threads the bilayer. At 272 to 307 (FKEKPKYPPSRAQSLSYALTSPDASYLGSIARLFKN) the chain is on the cytoplasmic side. The helical transmembrane segment at 308-338 (LNFVLLVITYGLNAGAFYALSTLLNRMVIWH) threads the bilayer. Y325 provides a ligand contact to choline. Residues 339–342 (YPGE) lie on the Extracellular side of the membrane. A helical transmembrane segment spans residues 343 to 371 (EVNAGRIGLTIVIAGMLGAVISGIWLDRS). Topologically, residues 372-373 (KT) are cytoplasmic. The helical transmembrane segment at 374–396 (YKETTLVVYIMTLVGMVVYTFTL) threads the bilayer. Over 397–399 (NLG) the chain is Extracellular. The chain crosses the membrane as a helical span at residues 400 to 429 (HLWVVFITAGTMGFFMTGYLPLGFEFAVEL). Topologically, residues 430 to 437 (TYPESEGI) are cytoplasmic. A helical transmembrane segment spans residues 438–463 (SSGLLNISAQVFGIIFTISQGQIIDN). Q447 is a choline binding site. At 464–465 (YG) the chain is on the extracellular side. Residues 466-488 (TKPGNIFLCVFLTLGAALTAFIK) traverse the membrane as a helical segment. Residues 489–526 (ADLRRQKANKETLENKLQEEEEESNTSKVPTAVSEDHL) are Cytoplasmic-facing. A disordered region spans residues 500 to 526 (TLENKLQEEEEESNTSKVPTAVSEDHL). S515 carries the phosphoserine modification.

Belongs to the major facilitator superfamily. Feline leukemia virus subgroup C receptor (TC 2.A.1.28.1) family. In terms of assembly, interacts with components of electron transfer chain complexes III, IV and V including CYC1, NDUFA4, COX4I1, ATP5PD and ATP5F1C; these interactions occur in the absence of heme and are disrupted upon heme binding. Interacts with ATP2A2; this interaction occurs in the absence of heme and promotes ATP2A2 proteasomal degradation; the complex is dissociated upon heme binding. Interacts with HMOX1; this interaction is potentiated in the presence of heme. Expressed in non-hematopoietic tissues, with relative abundant expression in brain, placenta, lung, liver and kidney. Also expressed in hematopoietic tissues (fetal liver, spleen, lymph node, thymus, leukocytes and bone marrow). Found in acidophil cells of the pituitary that secrete growth hormone and prolactin (at protein level).

The protein resides in the cell membrane. It is found in the mitochondrion membrane. Its subcellular location is the endoplasmic reticulum membrane. It carries out the reaction choline(out) = choline(in). The catalysed reaction is ethanolamine(in) = ethanolamine(out). It catalyses the reaction heme b(in) = heme b(out). Choline uniporter that specifically mediates choline uptake at the blood-brain-barrier. Responsible for the majority of choline uptake across the blood-brain-barrier from the circulation into the brain. Choline, a nutrient critical for brain development, is a precursor of phosphatidylcholine, as well as betaine. Also mediates transport of ethanolamine. Choline and ethanolamine transport is not coupled with proton transport and is exclusively driven by the choline gradient across the plasma membrane. However, the presence of an inwardly directed proton gradient enhances choline uptake. Also acts as a heme b transporter. Required to regulate mitochondrial respiration processes, ATP synthesis and thermogenesis. At low heme levels, interacts with components of electron transfer chain (ETC) complexes and ATP2A2, leading to ubiquitin-mediated degradation of ATP2A2 and inhibition of thermogenesis. Upon heme binding, dissociates from ETC complexes to allow switching from mitochondrial ATP synthesis to thermogenesis. The chain is Choline/ethanolamine transporter FLVCR2 from Homo sapiens (Human).